A 155-amino-acid polypeptide reads, in one-letter code: Protein-export protein SecB (155 aa).

It belongs to the SecB family. As to quaternary structure, homotetramer, a dimer of dimers. One homotetramer interacts with 1 SecA dimer.

The protein resides in the cytoplasm. Its function is as follows. One of the proteins required for the normal export of preproteins out of the cell cytoplasm. It is a molecular chaperone that binds to a subset of precursor proteins, maintaining them in a translocation-competent state. It also specifically binds to its receptor SecA. The sequence is that of Protein-export protein SecB from Enterobacter sp. (strain 638).